Here is a 103-residue protein sequence, read N- to C-terminus: N(4)-acetylcytidine amidohydrolase (103 aa).

In terms of domain architecture, ASCH spans 6–94 (ITFFQRFQND…IAEIYPNQTQ (89 aa)). Catalysis depends on K21, which acts as the Proton acceptor. Catalysis depends on T24, which acts as the Nucleophile. E74 (proton donor) is an active-site residue.

This sequence belongs to the N(4)-acetylcytidine amidohydrolase family.

The enzyme catalyses N(4)-acetylcytidine + H2O = cytidine + acetate + H(+). It carries out the reaction N(4)-acetyl-2'-deoxycytidine + H2O = 2'-deoxycytidine + acetate + H(+). The catalysed reaction is N(4)-acetylcytosine + H2O = cytosine + acetate + H(+). Catalyzes the hydrolysis of N(4)-acetylcytidine (ac4C). This is N(4)-acetylcytidine amidohydrolase (yqfB) from Salmonella typhi.